Reading from the N-terminus, the 358-residue chain is Gentisate 1,2-dioxygenase (358 aa).

Residues 99–165 (QYLGPREVAP…VTDEPMAWLD (67 aa)) form the Cupin type-2 domain. The disordered stretch occupies residues 185–215 (DELSTRETPERSRGERLWGHPGLRPIGRPDQ). A compositionally biased stretch (basic and acidic residues) spans 187-202 (LSTRETPERSRGERLW).

It belongs to the gentisate 1,2-dioxygenase family.

It carries out the reaction 2,5-dihydroxybenzoate + O2 = 3-maleylpyruvate + H(+). In terms of biological role, involved in the degradation of salicylate via a pathway involving coenzyme A derivative. Catalyzes the oxygen-dependent ring fission of gentisate between the carboxyl and proximal hydroxyl groups at positions 1 and 2 of the aromatic ring to form maleylpyruvate. The substrate specificity is strong, since salicylate, catechol, protocatechuic acid, homogenetisate, 2,3-dihydroxybenzoate or 5-aminosalicylate cannot substitute for gentisate in the ring cleavage reaction. This is Gentisate 1,2-dioxygenase from Streptomyces sp.